The sequence spans 165 residues: Transcriptional repressor NrdR (165 aa).

The segment at 3 to 34 (CPFCSANDTKVIDSRLVSDGHQVRRRRECLAC) is a zinc-finger region. An ATP-cone domain is found at 49-139 (PRIIKRDGSR…VYLSFEDISE (91 aa)).

It belongs to the NrdR family. It depends on Zn(2+) as a cofactor.

Negatively regulates transcription of bacterial ribonucleotide reductase nrd genes and operons by binding to NrdR-boxes. The sequence is that of Transcriptional repressor NrdR from Colwellia psychrerythraea (strain 34H / ATCC BAA-681) (Vibrio psychroerythus).